The following is a 375-amino-acid chain: Methylthioribose-1-phosphate isomerase (375 aa).

D257 acts as the Proton donor in catalysis.

It belongs to the eIF-2B alpha/beta/delta subunits family. MtnA subfamily.

It is found in the cytoplasm. Its subcellular location is the nucleus. It catalyses the reaction 5-(methylsulfanyl)-alpha-D-ribose 1-phosphate = 5-(methylsulfanyl)-D-ribulose 1-phosphate. It participates in amino-acid biosynthesis; L-methionine biosynthesis via salvage pathway; L-methionine from S-methyl-5-thio-alpha-D-ribose 1-phosphate: step 1/6. Its function is as follows. Catalyzes the interconversion of methylthioribose-1-phosphate (MTR-1-P) into methylthioribulose-1-phosphate (MTRu-1-P). In Leishmania infantum, this protein is Methylthioribose-1-phosphate isomerase.